The primary structure comprises 209 residues: Orotate phosphoribosyltransferase (209 aa).

5-phospho-alpha-D-ribose 1-diphosphate contacts are provided by residues arginine 96, lysine 100, histidine 102, and 122–130 (EDLISTGGS). Serine 126 contributes to the orotate binding site.

Belongs to the purine/pyrimidine phosphoribosyltransferase family. PyrE subfamily. Homodimer. The cofactor is Mg(2+).

The catalysed reaction is orotidine 5'-phosphate + diphosphate = orotate + 5-phospho-alpha-D-ribose 1-diphosphate. Its pathway is pyrimidine metabolism; UMP biosynthesis via de novo pathway; UMP from orotate: step 1/2. Catalyzes the transfer of a ribosyl phosphate group from 5-phosphoribose 1-diphosphate to orotate, leading to the formation of orotidine monophosphate (OMP). The chain is Orotate phosphoribosyltransferase from Streptococcus thermophilus (strain ATCC BAA-491 / LMD-9).